A 91-amino-acid chain; its full sequence is Probable Fe(2+)-trafficking protein (91 aa).

The protein belongs to the Fe(2+)-trafficking protein family.

Its function is as follows. Could be a mediator in iron transactions between iron acquisition and iron-requiring processes, such as synthesis and/or repair of Fe-S clusters in biosynthetic enzymes. The protein is Probable Fe(2+)-trafficking protein of Burkholderia thailandensis (strain ATCC 700388 / DSM 13276 / CCUG 48851 / CIP 106301 / E264).